Here is a 152-residue protein sequence, read N- to C-terminus: Transcriptional regulator MraZ (152 aa).

2 SpoVT-AbrB domains span residues 5–52 (ATLV…PLPE) and 81–124 (ASEC…DETT).

It belongs to the MraZ family. Forms oligomers.

It localises to the cytoplasm. The protein resides in the nucleoid. In terms of biological role, negatively regulates its own expression and that of the subsequent genes in the proximal part of the division and cell wall (dcw) gene cluster. Acts by binding directly to DNA. May also regulate the expression of genes outside the dcw cluster. The polypeptide is Transcriptional regulator MraZ (Citrobacter koseri (strain ATCC BAA-895 / CDC 4225-83 / SGSC4696)).